The following is an 805-amino-acid chain: Endonuclease MutS2 (805 aa).

Position 344–351 (G344–T351) interacts with ATP. The disordered stretch occupies residues R705–G724. One can recognise a Smr domain in the interval L729 to R804.

It belongs to the DNA mismatch repair MutS family. MutS2 subfamily. In terms of assembly, homodimer. Binds to stalled ribosomes, contacting rRNA.

Its function is as follows. Endonuclease that is involved in the suppression of homologous recombination and thus may have a key role in the control of bacterial genetic diversity. In terms of biological role, acts as a ribosome collision sensor, splitting the ribosome into its 2 subunits. Detects stalled/collided 70S ribosomes which it binds and splits by an ATP-hydrolysis driven conformational change. Acts upstream of the ribosome quality control system (RQC), a ribosome-associated complex that mediates the extraction of incompletely synthesized nascent chains from stalled ribosomes and their subsequent degradation. Probably generates substrates for RQC. This Anaeromyxobacter sp. (strain Fw109-5) protein is Endonuclease MutS2.